We begin with the raw amino-acid sequence, 390 residues long: Protein shisa-9 (390 aa).

A signal peptide spans 1–22; sequence MTGIRAIFYYFLVDLLTLLCWA. At 23–134 the chain is on the extracellular side; it reads QGKGGQHFGS…DPSHDPTRDK (112 aa). N-linked (GlcNAc...) asparagine glycans are attached at residues N40 and N74. The chain crosses the membrane as a helical span at residues 135 to 155; the sequence is TNLIVYIICGVVAVMVLVGIF. Residues 156 to 390 lie on the Cytoplasmic side of the membrane; the sequence is TKLGLEKAHR…VTNSKTEVTV (235 aa).

It belongs to the shisa family. SHISA9 subfamily. As to quaternary structure, component of some AMPA receptors (ionotropic glutamate receptors) complex.

The protein resides in the cell projection. The protein localises to the dendritic spine membrane. It is found in the synapse. Functionally, regulator of short-term neuronal synaptic plasticity in the dentate gyrus. Associates with AMPA receptors (ionotropic glutamate receptors) in synaptic spines and promotes AMPA receptor desensitization at excitatory synapses. The chain is Protein shisa-9 (shisa9) from Xenopus tropicalis (Western clawed frog).